A 669-amino-acid chain; its full sequence is Myb-like protein M (669 aa).

Residues 27-69 (DPSLMDDEFSDNEYDLSPKDDVPSPSKRGRGQIQNGIRRSPNK) are disordered. The segment covering 30–40 (LMDDEFSDNEY) has biased composition (acidic residues). HTH myb-type domains are found at residues 60-118 (QNGI…SPDI) and 119-170 (RKGP…SREV). DNA-binding regions (H-T-H motif) lie at residues 90 to 114 (WKRI…KRVL) and 142 to 166 (WKKI…KSLQ). In terms of domain architecture, Myb-like spans 172–223 (WVPKEDEVLVKKVDEMGENLSWLEVSEYLAKLKHTNTLRTALECKTRYLQLT). 2 disordered regions span residues 226–530 (GGSI…EDNG) and 550–636 (IKNK…PHQS). Low complexity-rich tracts occupy residues 234-382 (NQSN…SSPS), 389-415 (NNNN…NSNN), and 450-464 (PTSL…SSPS). Residues 465–482 (CNNSIRQPSPSPSIKTFK) are compositionally biased toward polar residues. 3 stretches are compositionally biased toward low complexity: residues 483–521 (STIV…NNDN), 555–593 (NNNN…NSDN), and 611–636 (SNFK…PHQS).

It is found in the nucleus. This is Myb-like protein M (mybM) from Dictyostelium discoideum (Social amoeba).